Reading from the N-terminus, the 20-residue chain is Short cationic peptide-4a (20 aa).

Glu20 is modified (glutamic acid 1-amide).

In terms of tissue distribution, expressed by the venom gland.

The protein resides in the secreted. The protein is Short cationic peptide-4a of Cupiennius salei (American wandering spider).